We begin with the raw amino-acid sequence, 176 residues long: NAD(P)H-quinone oxidoreductase subunit 6, chloroplastic (176 aa).

Transmembrane regions (helical) follow at residues 10-30 (FILV…VFFT), 32-52 (TIFS…FYIL), 63-83 (LLIY…FMNG), 92-112 (VWTV…ISQI), and 152-172 (FFLP…GAIF).

Belongs to the complex I subunit 6 family. In terms of assembly, NDH is composed of at least 16 different subunits, 5 of which are encoded in the nucleus.

It is found in the plastid. It localises to the chloroplast thylakoid membrane. The catalysed reaction is a plastoquinone + NADH + (n+1) H(+)(in) = a plastoquinol + NAD(+) + n H(+)(out). The enzyme catalyses a plastoquinone + NADPH + (n+1) H(+)(in) = a plastoquinol + NADP(+) + n H(+)(out). Its function is as follows. NDH shuttles electrons from NAD(P)H:plastoquinone, via FMN and iron-sulfur (Fe-S) centers, to quinones in the photosynthetic chain and possibly in a chloroplast respiratory chain. The immediate electron acceptor for the enzyme in this species is believed to be plastoquinone. Couples the redox reaction to proton translocation, and thus conserves the redox energy in a proton gradient. The polypeptide is NAD(P)H-quinone oxidoreductase subunit 6, chloroplastic (ndhG) (Phaseolus vulgaris (Kidney bean)).